The following is a 538-amino-acid chain: Atos homolog protein B (538 aa).

A compositionally biased stretch (low complexity) spans 1-18 (MRHVQAEPSPSSEPEAGP). Disordered stretches follow at residues 1 to 103 (MRHV…GLLG), 153 to 185 (NTLH…QLHT), 197 to 300 (GGKS…VLDP), and 323 to 342 (SLRK…VPTP). Over residues 227-238 (HTPPGPGPPGPC) the composition is skewed to pro residues. Phosphoserine is present on residues Ser254 and Ser255. Low complexity predominate over residues 323-334 (SLRKGPGLLSPP). Positions 348-430 (LLGSFEESLL…VPKVGTIQVT (83 aa)) are required for macropage invasion. The tract at residues 436 to 444 (QTVVKMFLV) is transactivation domain 1 (TAD1).

The protein belongs to the ATOS family.

The protein resides in the nucleus. Its function is as follows. Transcription regulator that may syncronize transcriptional and translational programs. This chain is Atos homolog protein B, found in Pongo abelii (Sumatran orangutan).